A 356-amino-acid polypeptide reads, in one-letter code: S-adenosylmethionine:tRNA ribosyltransferase-isomerase (356 aa).

This sequence belongs to the QueA family. As to quaternary structure, monomer.

It localises to the cytoplasm. The catalysed reaction is 7-aminomethyl-7-carbaguanosine(34) in tRNA + S-adenosyl-L-methionine = epoxyqueuosine(34) in tRNA + adenine + L-methionine + 2 H(+). Its pathway is tRNA modification; tRNA-queuosine biosynthesis. Its function is as follows. Transfers and isomerizes the ribose moiety from AdoMet to the 7-aminomethyl group of 7-deazaguanine (preQ1-tRNA) to give epoxyqueuosine (oQ-tRNA). This Salmonella arizonae (strain ATCC BAA-731 / CDC346-86 / RSK2980) protein is S-adenosylmethionine:tRNA ribosyltransferase-isomerase.